The primary structure comprises 354 residues: Protein-arginine kinase (354 aa).

Residues 24 to 254 form the Phosphagen kinase C-terminal domain; the sequence is IVLSSRIRLA…QQIIQQEKMA (231 aa). Residues 27–31, H92, R125, 176–180, and 207–212 contribute to the ATP site; these read SSRIR, RASVM, and RGIYGE. An RDXXRA motif of the pArg binding pocket involved in allosteric regulation motif is present at residues 337 to 342; it reads RDYRRA.

Belongs to the ATP:guanido phosphotransferase family.

The catalysed reaction is L-arginyl-[protein] + ATP = N(omega)-phospho-L-arginyl-[protein] + ADP + H(+). With respect to regulation, appears to be allosterically activated by the binding of pArg-containing polypeptides to the pArg-binding pocket localized in the C-terminal domain of McsB. In terms of biological role, catalyzes the specific phosphorylation of arginine residues in a large number of proteins. Is part of the bacterial stress response system. Protein arginine phosphorylation has a physiologically important role and is involved in the regulation of many critical cellular processes, such as protein homeostasis, motility, competence, and stringent and stress responses, by regulating gene expression and protein activity. The chain is Protein-arginine kinase from Bacillus thuringiensis subsp. konkukian (strain 97-27).